We begin with the raw amino-acid sequence, 517 residues long: Phenol 2-monooxygenase, oxygenase component DmpN (517 aa).

The Fe cation site is built by glutamate 109, glutamate 139, histidine 142, glutamate 200, glutamate 234, and histidine 237.

Belongs to the TmoA/XamoA family. As to quaternary structure, the multicomponent enzyme phenol hydroxylase is formed by DmpL (P1 component), DmpM (P2 component), DmpN (P3 component), DmpO (P4 component) and DmpP (P5 component). The oxygenase component is a dimer composed of three subunits, DmpL, DmpN and DmpO (DmpLNO). DmpN interacts with the auxiliary protein DmpK (P0 component). Requires Fe(2+) as cofactor.

It catalyses the reaction phenol + NADH + O2 + H(+) = catechol + NAD(+) + H2O. It participates in aromatic compound metabolism; phenol degradation. Its activity is regulated as follows. Requires DmpM for efficient turnover. The activity of DmpLNO oxygenase is inhibited by dithiothreitol (DTT) by a mechanism apparently involving H(2)O(2) generation. In terms of biological role, part of a multicomponent enzyme which catalyzes the degradation of phenol and some of its methylated derivatives. DmpL, DmpN and DmpO form the oxygenase component of the complex. Required for growth on phenol and for in vitro phenol hydroxylase activity. The protein is Phenol 2-monooxygenase, oxygenase component DmpN of Pseudomonas sp. (strain CF600).